A 299-amino-acid chain; its full sequence is Homoserine kinase (299 aa).

ATP is bound at residue 88–98; the sequence is PLGRGLGSSAT.

Belongs to the GHMP kinase family. Homoserine kinase subfamily.

It localises to the cytoplasm. The enzyme catalyses L-homoserine + ATP = O-phospho-L-homoserine + ADP + H(+). It participates in amino-acid biosynthesis; L-threonine biosynthesis; L-threonine from L-aspartate: step 4/5. Its function is as follows. Catalyzes the ATP-dependent phosphorylation of L-homoserine to L-homoserine phosphate. This chain is Homoserine kinase, found in Gloeobacter violaceus (strain ATCC 29082 / PCC 7421).